Consider the following 219-residue polypeptide: Ribonuclease T (219 aa).

Residues 20-194 (VVIDIETAGF…YDSLQTANLF (175 aa)) enclose the Exonuclease domain. Residues Asp-23, Glu-25, His-181, and Asp-186 each coordinate Mg(2+). His-181 serves as the catalytic Proton donor/acceptor.

Belongs to the RNase T family. In terms of assembly, homodimer. Requires Mg(2+) as cofactor.

Functionally, trims short 3' overhangs of a variety of RNA species, leaving a one or two nucleotide 3' overhang. Responsible for the end-turnover of tRNA: specifically removes the terminal AMP residue from uncharged tRNA (tRNA-C-C-A). Also appears to be involved in tRNA biosynthesis. This is Ribonuclease T from Buchnera aphidicola subsp. Schizaphis graminum (strain Sg).